Consider the following 173-residue polypeptide: Protein tyrosine phosphatase type IVA 3 (173 aa).

Residues Ala-8–Lys-161 enclose the Tyrosine-protein phosphatase domain. An intrachain disulfide couples Cys-49 to Cys-104. Asp-72 serves as the catalytic Proton donor. The active-site Phosphocysteine intermediate is the Cys-104. Arg-110 is a binding site for substrate. The residue at position 170 (Cys-170) is a Cysteine methyl ester. The S-farnesyl cysteine moiety is linked to residue Cys-170. A propeptide spans Cys-171–Met-173 (removed in mature form).

This sequence belongs to the protein-tyrosine phosphatase family. Interacts with tubulin. In terms of processing, farnesylated. Farnesylation is required for membrane targeting. Unfarnesylated forms are shifted into the nucleus.

It is found in the cell membrane. Its subcellular location is the early endosome. It carries out the reaction O-phospho-L-tyrosyl-[protein] + H2O = L-tyrosyl-[protein] + phosphate. With respect to regulation, inhibited by sodium orthovanadate and peroxovanadium compounds, and by pentamidine. In terms of biological role, protein tyrosine phosphatase which stimulates progression from G1 into S phase during mitosis. Enhances cell proliferation, cell motility and invasive activity, and promotes cancer metastasis. May be involved in the progression of cardiac hypertrophy by inhibiting intracellular calcium mobilization in response to angiotensin II. In Bos taurus (Bovine), this protein is Protein tyrosine phosphatase type IVA 3 (PTP4A3).